A 177-amino-acid polypeptide reads, in one-letter code: Large ribosomal subunit protein uL6 (177 aa).

It belongs to the universal ribosomal protein uL6 family. Part of the 50S ribosomal subunit.

In terms of biological role, this protein binds to the 23S rRNA, and is important in its secondary structure. It is located near the subunit interface in the base of the L7/L12 stalk, and near the tRNA binding site of the peptidyltransferase center. The chain is Large ribosomal subunit protein uL6 from Bartonella bacilliformis (strain ATCC 35685 / KC583 / Herrer 020/F12,63).